The sequence spans 216 residues: Ras-related protein YPTC6 (216 aa).

19–26 (GDSGVGKS) serves as a coordination point for GTP. Positions 41 to 49 (SKSTIGVEF) match the Effector region motif. GTP is bound by residues 67 to 71 (DTAGQ) and 125 to 128 (NKSD). Residues cysteine 214 and cysteine 215 are each lipidated (S-geranylgeranyl cysteine).

Belongs to the small GTPase superfamily. Rab family.

The protein resides in the cell membrane. The protein is Ras-related protein YPTC6 (YPTC6) of Chlamydomonas reinhardtii (Chlamydomonas smithii).